We begin with the raw amino-acid sequence, 182 residues long: ATP synthase subunit b, chloroplastic (182 aa).

Residues 33–55 (VLNIMLLLFGLIYVLKQFLGSLL) form a helical membrane-spanning segment.

This sequence belongs to the ATPase B chain family. As to quaternary structure, F-type ATPases have 2 components, F(1) - the catalytic core - and F(0) - the membrane proton channel. F(1) has five subunits: alpha(3), beta(3), gamma(1), delta(1), epsilon(1). F(0) has four main subunits: a(1), b(1), b'(1) and c(10-14). The alpha and beta chains form an alternating ring which encloses part of the gamma chain. F(1) is attached to F(0) by a central stalk formed by the gamma and epsilon chains, while a peripheral stalk is formed by the delta, b and b' chains.

Its subcellular location is the plastid. The protein resides in the chloroplast thylakoid membrane. Functionally, f(1)F(0) ATP synthase produces ATP from ADP in the presence of a proton or sodium gradient. F-type ATPases consist of two structural domains, F(1) containing the extramembraneous catalytic core and F(0) containing the membrane proton channel, linked together by a central stalk and a peripheral stalk. During catalysis, ATP synthesis in the catalytic domain of F(1) is coupled via a rotary mechanism of the central stalk subunits to proton translocation. In terms of biological role, component of the F(0) channel, it forms part of the peripheral stalk, linking F(1) to F(0). The polypeptide is ATP synthase subunit b, chloroplastic (Antithamnion sp. (Red alga)).